Reading from the N-terminus, the 530-residue chain is Polyprotein pp62 (530 aa).

The protein belongs to the asfivirus polyprotein pp62 family. Monomer. Predominantly exists as a monomer, with very little dimers. Homodimerization seems to be linked to low pH. In terms of assembly, homodimer; disulfide-linked. Homotrimer; disulfide-linked. Homohexamer. In terms of processing, monoubiquitinated in vitro by viral UBCv1. Post-translationally, specific enzymatic cleavages in vivo yield mature proteins.

It localises to the host cytoplasm. The protein localises to the host perinuclear region. It is found in the virion. Essential for the correct assembly and maturation of the core of the virion. Functionally, component of the core shell. Binds to phosphatidylserine, which may enable the core shell binding with the inner membrane. Its function is as follows. Component of the core shell. Binds to phosphatidylserine and DNA, which may link the core shell to the inner membrane and to the viral nucleoid. In terms of biological role, component of the core shell. This chain is Polyprotein pp62, found in Ornithodoros (relapsing fever ticks).